A 479-amino-acid polypeptide reads, in one-letter code: CBL-interacting serine/threonine-protein kinase 10 (479 aa).

The Protein kinase domain occupies 12–266 (YDVGRLLGQG…IARIRESSWF (255 aa)). Residues 18–26 (LGQGTFAKV) and K41 each bind ATP. The Proton acceptor role is filled by D134. The tract at residues 152-181 (DFGLSALADCKRQDGLLHTTCGTPAYVAPE) is activation loop. A Phosphoserine modification is found at S156. T170 carries the phosphothreonine modification. A disordered region spans residues 286–323 (SVEAGTAGTNENGAGPSENGAGPSENGDRVTEENHTDE). Over residues 288 to 300 (EAGTAGTNENGAG) the composition is skewed to low complexity. Residues 311–323 (NGDRVTEENHTDE) show a composition bias toward basic and acidic residues. Residues 322–346 (DEPTNLNAFDLIALSAGFDLAGLFG) form the NAF domain. The tract at residues 350-379 (KRESRFTSQKPASVIISKLEEVAQRLKLSI) is PPI. The segment at 456–479 (SQQETEYQQQQQQEQQEQEEPLKF) is disordered. The segment covering 457 to 470 (QQETEYQQQQQQEQ) has biased composition (low complexity).

It belongs to the protein kinase superfamily. CAMK Ser/Thr protein kinase family. SNF1 subfamily. In terms of assembly, interacts with CBL4/SOS3. Mn(2+) is required as a cofactor. Mostly expressed in roots.

It catalyses the reaction L-seryl-[protein] + ATP = O-phospho-L-seryl-[protein] + ADP + H(+). The catalysed reaction is L-threonyl-[protein] + ATP = O-phospho-L-threonyl-[protein] + ADP + H(+). CIPK serine-threonine protein kinases interact with CBL proteins. Binding of a CBL protein to the regulatory NAF domain of CIPK protein lead to the activation of the kinase in a calcium-dependent manner. The chain is CBL-interacting serine/threonine-protein kinase 10 (CIPK10) from Arabidopsis thaliana (Mouse-ear cress).